Here is a 178-residue protein sequence, read N- to C-terminus: Large ribosomal subunit protein bL25 (178 aa).

The protein belongs to the bacterial ribosomal protein bL25 family. CTC subfamily. As to quaternary structure, part of the 50S ribosomal subunit; part of the 5S rRNA/L5/L18/L25 subcomplex. Contacts the 5S rRNA. Binds to the 5S rRNA independently of L5 and L18.

In terms of biological role, this is one of the proteins that binds to the 5S RNA in the ribosome where it forms part of the central protuberance. The sequence is that of Large ribosomal subunit protein bL25 from Campylobacter jejuni subsp. jejuni serotype O:6 (strain 81116 / NCTC 11828).